A 133-amino-acid polypeptide reads, in one-letter code: Small ribosomal subunit protein uS8 (133 aa).

The protein belongs to the universal ribosomal protein uS8 family. In terms of assembly, part of the 30S ribosomal subunit. Contacts proteins S5 and S12.

One of the primary rRNA binding proteins, it binds directly to 16S rRNA central domain where it helps coordinate assembly of the platform of the 30S subunit. The chain is Small ribosomal subunit protein uS8 from Orientia tsutsugamushi (strain Boryong) (Rickettsia tsutsugamushi).